Consider the following 293-residue polypeptide: Phosphatidylserine decarboxylase proenzyme (293 aa).

Residues Asp88, His144, and Ser247 each act as charge relay system; for autoendoproteolytic cleavage activity in the active site. Ser247 (schiff-base intermediate with substrate; via pyruvic acid; for decarboxylase activity) is an active-site residue. Position 247 is a pyruvic acid (Ser); by autocatalysis (Ser247).

The protein belongs to the phosphatidylserine decarboxylase family. PSD-B subfamily. Prokaryotic type I sub-subfamily. In terms of assembly, heterodimer of a large membrane-associated beta subunit and a small pyruvoyl-containing alpha subunit. The cofactor is pyruvate. Is synthesized initially as an inactive proenzyme. Formation of the active enzyme involves a self-maturation process in which the active site pyruvoyl group is generated from an internal serine residue via an autocatalytic post-translational modification. Two non-identical subunits are generated from the proenzyme in this reaction, and the pyruvate is formed at the N-terminus of the alpha chain, which is derived from the carboxyl end of the proenzyme. The autoendoproteolytic cleavage occurs by a canonical serine protease mechanism, in which the side chain hydroxyl group of the serine supplies its oxygen atom to form the C-terminus of the beta chain, while the remainder of the serine residue undergoes an oxidative deamination to produce ammonia and the pyruvoyl prosthetic group on the alpha chain. During this reaction, the Ser that is part of the protease active site of the proenzyme becomes the pyruvoyl prosthetic group, which constitutes an essential element of the active site of the mature decarboxylase.

The protein resides in the cell membrane. The enzyme catalyses a 1,2-diacyl-sn-glycero-3-phospho-L-serine + H(+) = a 1,2-diacyl-sn-glycero-3-phosphoethanolamine + CO2. It functions in the pathway phospholipid metabolism; phosphatidylethanolamine biosynthesis; phosphatidylethanolamine from CDP-diacylglycerol: step 2/2. Functionally, catalyzes the formation of phosphatidylethanolamine (PtdEtn) from phosphatidylserine (PtdSer). This Xylella fastidiosa (strain M12) protein is Phosphatidylserine decarboxylase proenzyme.